We begin with the raw amino-acid sequence, 175 residues long: Transcriptional activatory protein BadR (175 aa).

Positions 20 to 156 (ANRLFFRLYQ…TLHYLLKILD (137 aa)) constitute an HTH marR-type domain.

In terms of biological role, transcriptional activator of genes for the anaerobic degradation of benzoate. This is Transcriptional activatory protein BadR (badR) from Rhodopseudomonas palustris (strain ATCC BAA-98 / CGA009).